We begin with the raw amino-acid sequence, 541 residues long: Protein yellow (541 aa).

The first 21 residues, 1–21, serve as a signal peptide directing secretion; it reads MFQDKGWILVTLITLVTPSWA. 2 N-linked (GlcNAc...) asparagine glycosylation sites follow: N144 and N215. Residues 443-463 form a disordered region; that stretch reads QKPQTSWASSPPPPSRTYLPA.

It belongs to the major royal jelly protein family.

It localises to the secreted. Its function is as follows. Controls the pigmentation pattern of the adult cuticle and larval mouth parts. This is Protein yellow (y) from Drosophila mauritiana (Fruit fly).